Consider the following 89-residue polypeptide: Small ribosomal subunit protein bS18 (89 aa).

The segment covering 1–15 has biased composition (low complexity); the sequence is MTTANTNETAAAAAA. Positions 1–22 are disordered; the sequence is MTTANTNETAAAAAAKNRRNKK.

Belongs to the bacterial ribosomal protein bS18 family. Part of the 30S ribosomal subunit. Forms a tight heterodimer with protein bS6.

Binds as a heterodimer with protein bS6 to the central domain of the 16S rRNA, where it helps stabilize the platform of the 30S subunit. The protein is Small ribosomal subunit protein bS18 of Caldanaerobacter subterraneus subsp. tengcongensis (strain DSM 15242 / JCM 11007 / NBRC 100824 / MB4) (Thermoanaerobacter tengcongensis).